Here is a 212-residue protein sequence, read N- to C-terminus: uncharacterized protein (212 aa).

Residues 5 to 25 traverse the membrane as a helical segment; the sequence is IFIILIAVLLIGVNIKKIAAA.

The protein localises to the membrane. This is an uncharacterized protein from Borreliella burgdorferi (strain ATCC 35210 / DSM 4680 / CIP 102532 / B31) (Borrelia burgdorferi).